We begin with the raw amino-acid sequence, 356 residues long: Peptide chain release factor 1 (356 aa).

Q230 bears the N5-methylglutamine mark. Residues 279–289 (ALDSARSEARK) are compositionally biased toward basic and acidic residues. The disordered stretch occupies residues 279 to 299 (ALDSARSEARKSQVGSGDRSE).

This sequence belongs to the prokaryotic/mitochondrial release factor family. In terms of processing, methylated by PrmC. Methylation increases the termination efficiency of RF1.

The protein resides in the cytoplasm. Its function is as follows. Peptide chain release factor 1 directs the termination of translation in response to the peptide chain termination codons UAG and UAA. The protein is Peptide chain release factor 1 (prfA) of Caulobacter vibrioides (strain ATCC 19089 / CIP 103742 / CB 15) (Caulobacter crescentus).